Here is a 172-residue protein sequence, read N- to C-terminus: Antibacterial protein PR-39 (172 aa).

Residues 1-29 (METQRASLCLGRWSLWLLLLGLVVPSASA) form the signal peptide. Pyrrolidone carboxylic acid is present on glutamine 30. A propeptide spanning residues 30-130 (QALSYREAVL…DISCNEIQSV (101 aa)) is cleaved from the precursor. The tract at residues 61-80 (DQPPKADEDPGTPKPVSFTV) is disordered. Cystine bridges form between cysteine 85–cysteine 96 and cysteine 107–cysteine 124. The segment at 130-172 (VRRRPRPPYLPRPRPPPFFPPRLPPRIPPGFPPRFPPRFPGKR) is disordered. Residues 136–172 (PPYLPRPRPPPFFPPRLPPRIPPGFPPRFPPRFPGKR) are compositionally biased toward pro residues. Residue proline 169 is modified to Proline amide.

It belongs to the cathelicidin family. Small intestine and bone marrow.

The protein localises to the secreted. In terms of biological role, exerts a potent antimicrobial activity against both E.coli and B.megaterium. The chain is Antibacterial protein PR-39 (PR39) from Sus scrofa (Pig).